Consider the following 241-residue polypeptide: MHSPVEQFAIKPLVSIQVAGVDVSFTNSSLLMLLTVGLAAAFFWNATARRTLIPGRLQSAAEMLYEFVANMIRDNVGKEGMKYFPYILTLFVFVFLGNMLGMLPYSFTFTSHIAVTAALAVGIFIAVTIIGFARHGFHYFRMFFPHGAPLLTAPLLIPIELISYLSRPFSLSVRLFANMTVGHIMLKVLAGFVIMLGVVGGVVPFAVVLGVTVLEFFIAALQAYVFTILTCIYLNDAINMH.

Helical transmembrane passes span 23 to 43, 83 to 103, 113 to 133, 188 to 208, and 209 to 229; these read VSFT…AAFF, YFPY…LGML, IAVT…IGFA, VLAG…FAVV, and LGVT…FTIL.

This sequence belongs to the ATPase A chain family. F-type ATPases have 2 components, CF(1) - the catalytic core - and CF(0) - the membrane proton channel. CF(1) has five subunits: alpha(3), beta(3), gamma(1), delta(1), epsilon(1). CF(0) has four main subunits: a, b, b' and c.

The protein resides in the cell inner membrane. In terms of biological role, key component of the proton channel; it plays a direct role in the translocation of protons across the membrane. The sequence is that of ATP synthase subunit a from Rhodospirillum rubrum (strain ATCC 11170 / ATH 1.1.1 / DSM 467 / LMG 4362 / NCIMB 8255 / S1).